Here is a 664-residue protein sequence, read N- to C-terminus: MHQDYFEHDVIVVGGGHSGSEAAAAAANMGADTLLITMKLADIGQMSCNPAIGGIGKGHIAREIDALGGIMGKATDRAGIQFRMLNKSKGPAVWGPRAQCGRRAYARAIRQELEAIDNLKMRSDMVKEILTDDAGETVTGVRTNLGKEFRAPCVVLTTGTFSNGVIHVGEQNFGGGRIGESASHGITGCLHDLGFESGRLKTGTPPRVDGRSIDYSVMEKQPGDPDATAFSFLTDDLPSVEAQLSCWLTDTTPETHEVLRTGFDRSPMFTGALDADGPRYCPSIEDKIDRFSEKDHHQLFIEPEGRDTHEVYVNGFSSSLPEEVQFEALRTVPGMEEAHMHRPGYAIEYDFFPPYQIEYSLETKYVDGLFFAGQINGTTGYEEAAAQGIMAGINAVQKLRQADPIVLKRSEAYIGVLIDDLVAKGTDEPYRMFTSRAEHRILLRQDNADQRLTELGHKLGLASKERLDRTREKERAIDVTRETLSDTTVSPQQVDDYLQSVGTSTLNQPRPVIELCKRPEVDSEDLLRHAGLYDEVVTEAPGMLSAPRLIEIDLKYEGYIDRQKDMVEEMEEKERWPIPDDFDYHALDNISIEARQKLSKVEPDNLGQASRVPGVRASDISVLMVLLKNEGVEPMPKDRDLNLDAMGGDGQSFGVSRETAVEVG.

FAD contacts are provided by residues 14–19, Val126, and Ser183; that span reads GGGHSG. Position 277–291 (277–291) interacts with NAD(+); the sequence is GPRYCPSIEDKIDRF. Gln374 serves as a coordination point for FAD.

The protein belongs to the MnmG family. As to quaternary structure, homodimer. Heterotetramer of two MnmE and two MnmG subunits. It depends on FAD as a cofactor.

It is found in the cytoplasm. In terms of biological role, NAD-binding protein involved in the addition of a carboxymethylaminomethyl (cmnm) group at the wobble position (U34) of certain tRNAs, forming tRNA-cmnm(5)s(2)U34. The polypeptide is tRNA uridine 5-carboxymethylaminomethyl modification enzyme MnmG (Salinibacter ruber (strain DSM 13855 / M31)).